The primary structure comprises 35 residues: LSLLGHDERVTPEPFDSVTAQNARGNQADVQSLPR.

Over residues 1–11 the composition is skewed to basic and acidic residues; the sequence is LSLLGHDERVT. A disordered region spans residues 1-35; that stretch reads LSLLGHDERVTPEPFDSVTAQNARGNQADVQSLPR. A compositionally biased stretch (polar residues) spans 18 to 35; sequence VTAQNARGNQADVQSLPR.

This sequence belongs to the peroxidase family. Heme b is required as a cofactor. It depends on Ca(2+) as a cofactor.

It carries out the reaction 2 Mn(2+) + H2O2 + 2 H(+) = 2 Mn(3+) + 2 H2O. Its function is as follows. Has manganese peroxidase activity. The chain is Manganese peroxidase from Irpex lacteus (Milk-white toothed polypore).